Consider the following 1885-residue polypeptide: Chitin synthase 5 (1885 aa).

A Myosin motor domain is found at 1–789 (MATRGNVPAH…SIALTGSQAA (789 aa)). ATP is bound at residue 99 to 106 (GESGSGKT). Asn219 and Asn429 each carry an N-linked (GlcNAc...) asparagine glycan. The interval 601–649 (KPLRMPSVSRKKHDQLRRMASRRADRSPAPQEEEPLPGTEEAKVRRTKP) is disordered. Residues 609-621 (SRKKHDQLRRMAS) are compositionally biased toward basic residues. The tract at residues 666–690 (LDNITKSLTAPNVNNYFVFCLKPND) is actin-binding. N-linked (GlcNAc...) asparagine glycosylation is present at Asn668. Residues 794 to 817 (GDIGSPSRPDTPGHNPFSDSKARL) are disordered. 2 helical membrane passes run 894–914 (WLAI…KWIG) and 929–949 (FAIN…IIVF). The Cytochrome b5 heme-binding domain occupies 957-1016 (QNVYSAAELSAHDGKGKHSAYVAIRGQVFDLGAFMPNHYPKIIPQSSLKKYAGVDATGLF). 2 N-linked (GlcNAc...) asparagine glycosylation sites follow: Asn1043 and Asn1068. A helical transmembrane segment spans residues 1205–1225 (ILLAVSILLCSVIGFKFFAAL). 2 N-linked (GlcNAc...) asparagine glycosylation sites follow: Asn1462 and Asn1568. The next 3 helical transmembrane spans lie at 1599–1619 (LLST…IVLL), 1626–1646 (VPLT…IIFI), and 1653–1673 (MIGW…GLPL). N-linked (GlcNAc...) asparagine glycosylation is found at Asn1759 and Asn1790. Positions 1827 to 1882 (LPTDDMLLNEIRDILRTADLMTVTKKGIKQELERRFNVNLDMKRAYIGSATEAILS) constitute a DEK-C domain.

The protein in the N-terminal section; belongs to the TRAFAC class myosin-kinesin ATPase superfamily. Myosin family. This sequence in the C-terminal section; belongs to the chitin synthase family. Class V subfamily. Maximal activity requires trypsin activation, suggesting a zymogenic nature.

Its subcellular location is the cell membrane. The protein localises to the membrane. The catalysed reaction is [(1-&gt;4)-N-acetyl-beta-D-glucosaminyl](n) + UDP-N-acetyl-alpha-D-glucosamine = [(1-&gt;4)-N-acetyl-beta-D-glucosaminyl](n+1) + UDP + H(+). Polymerizes chitin, a structural polymer of the cell wall and septum, by transferring the sugar moiety of UDP-GlcNAc to the non-reducing end of the growing chitin polymer. CHS5 is required for the sustained growth at 37 degrees Celsius and is of critical importance for virulence. Especially important at infection temperatures for maintaining the cell wall integrity of developing yeast buds, elongating tips of hyphae, and random sites of expansion in sclerotic forms. The sequence is that of Chitin synthase 5 from Exophiala dermatitidis (Black yeast-like fungus).